A 289-amino-acid polypeptide reads, in one-letter code: uncharacterized protein (289 aa).

The N-terminal stretch at 1 to 19 (MAKWLGAPLARGVSTATRA) is a signal peptide. Helical transmembrane passes span 90–110 (GLLAAAFVASVLLGVGIGWGV) and 257–277 (AALSLSLYVSSDYGGGYLVFA).

The protein localises to the cell membrane. This is an uncharacterized protein from Mycobacterium tuberculosis (strain ATCC 25618 / H37Rv).